The chain runs to 305 residues: Putative lipid kinase SAB0675c (305 aa).

One can recognise a DAGKc domain in the interval 3–139 (NKYTHGVLFY…YDVIKINNQY (137 aa)). Residues S44, 74–80 (GDGTVNE), and T101 each bind ATP. S220, D223, and E225 together coordinate Mg(2+). The active-site Proton acceptor is E281.

This sequence belongs to the diacylglycerol/lipid kinase family. Requires Mg(2+) as cofactor.

Functionally, may catalyze the ATP-dependent phosphorylation of lipids other than diacylglycerol (DAG). The protein is Putative lipid kinase SAB0675c of Staphylococcus aureus (strain bovine RF122 / ET3-1).